The chain runs to 360 residues: Peptide chain release factor 1 (360 aa).

Gln-236 bears the N5-methylglutamine mark.

It belongs to the prokaryotic/mitochondrial release factor family. In terms of processing, methylated by PrmC. Methylation increases the termination efficiency of RF1.

It is found in the cytoplasm. Functionally, peptide chain release factor 1 directs the termination of translation in response to the peptide chain termination codons UAG and UAA. The sequence is that of Peptide chain release factor 1 from Limosilactobacillus reuteri subsp. reuteri (strain JCM 1112) (Lactobacillus reuteri).